We begin with the raw amino-acid sequence, 237 residues long: Uridylate kinase (237 aa).

An ATP-binding site is contributed by 11-14 (KLSG). Gly53 serves as a coordination point for UMP. Positions 54 and 58 each coordinate ATP. Residues Asp73 and 134 to 141 (TGNPFFTT) contribute to the UMP site. ATP is bound by residues Thr161, Tyr167, and Asp170.

This sequence belongs to the UMP kinase family. As to quaternary structure, homohexamer.

Its subcellular location is the cytoplasm. The catalysed reaction is UMP + ATP = UDP + ADP. Its pathway is pyrimidine metabolism; CTP biosynthesis via de novo pathway; UDP from UMP (UMPK route): step 1/1. Inhibited by UTP. Its function is as follows. Catalyzes the reversible phosphorylation of UMP to UDP. The sequence is that of Uridylate kinase from Burkholderia mallei (strain NCTC 10247).